Here is a 257-residue protein sequence, read N- to C-terminus: Imidazole glycerol phosphate synthase subunit HisF (257 aa).

Catalysis depends on residues Asp-12 and Asp-131.

It belongs to the HisA/HisF family. As to quaternary structure, heterodimer of HisH and HisF.

The protein localises to the cytoplasm. The enzyme catalyses 5-[(5-phospho-1-deoxy-D-ribulos-1-ylimino)methylamino]-1-(5-phospho-beta-D-ribosyl)imidazole-4-carboxamide + L-glutamine = D-erythro-1-(imidazol-4-yl)glycerol 3-phosphate + 5-amino-1-(5-phospho-beta-D-ribosyl)imidazole-4-carboxamide + L-glutamate + H(+). It participates in amino-acid biosynthesis; L-histidine biosynthesis; L-histidine from 5-phospho-alpha-D-ribose 1-diphosphate: step 5/9. Functionally, IGPS catalyzes the conversion of PRFAR and glutamine to IGP, AICAR and glutamate. The HisF subunit catalyzes the cyclization activity that produces IGP and AICAR from PRFAR using the ammonia provided by the HisH subunit. This chain is Imidazole glycerol phosphate synthase subunit HisF, found in Burkholderia multivorans (strain ATCC 17616 / 249).